The sequence spans 335 residues: MTNSSEFTDVLQSRDPCVSNGIVINIDPIDPEPTPIRKEFTCEDTFHHEHHGNSEGFKTLTAFLCLMLSAFLNFFLLTVIHDVVPRQPLPDLTFMIIPQQRWAWSVGDVLSTVSSVVAFTIIFLHHQRWIVLRRTFLLGAIMYGLRAVILGVTFLPPSFHNRDEICQPQVNRTAMYGMEIATRFLTYVITLGLTSGQDKILCGDLMFSGHTVVLTIMYFVQLQYTPRGLVILRYIAAPITFLGIAALVVSGGHYTMDVLIAYWLTSHVFWSYHQIFEMRKDDRPQAPLSRLWWFWLCYWFESDVADGKLVNKWNWPLEGPQRMHTIMNRINYKLQ.

5 consecutive transmembrane segments (helical) span residues 60 to 80 (LTAF…LTVI), 104 to 124 (WSVG…IIFL), 136 to 156 (FLLG…TFLP), 200 to 220 (ILCG…MYFV), and 229 to 249 (LVIL…ALVV). H210 is a catalytic residue. Catalysis depends on residues H253 and D257. A helical membrane pass occupies residues 258–278 (VLIAYWLTSHVFWSYHQIFEM). Topologically, residues 279–335 (RKDDRPQAPLSRLWWFWLCYWFESDVADGKLVNKWNWPLEGPQRMHTIMNRINYKLQ) are cytoplasmic.

Belongs to the sphingomyelin synthase family.

Its subcellular location is the membrane. The enzyme catalyses an N-acylsphing-4-enine + a 1,2-diacyl-sn-glycero-3-phosphocholine = a sphingomyelin + a 1,2-diacyl-sn-glycerol. It catalyses the reaction an N-acyl-15-methylhexadecasphing-4-enine + a 1,2-diacyl-sn-glycero-3-phosphocholine = an N-acyl-15-methylhexadecasphing-4-enine-1-phosphocholine + a 1,2-diacyl-sn-glycerol. The protein operates within lipid metabolism; sphingolipid metabolism. Its function is as follows. Sphingomyelin synthases (SM synthase or SMS) synthesize the sphingolipid sphingomyelin (SM) through transfer of the phosphatidyl head group of 1,2-diacyl-sn-glycero-3-phosphocholine (phosphatidylcholine, PC) on to the primary hydroxyl of ceramide (N-acylsphingoid base), yielding 1,2-diacyl-sn-glycerol (diacylglycerol, DAG) as a side product. Functions as a bidirectional lipid cholinephosphotransferases capable of converting PC and ceramide to SM and DAG and vice versa depending on the respective levels of ceramide and DAG as phosphocholine acceptors, respectively. This Caenorhabditis elegans protein is Phosphatidylcholine:ceramide cholinephosphotransferase 2 (sms-2).